Reading from the N-terminus, the 461-residue chain is Methylthioribose transporter (461 aa).

A run of 12 helical transmembrane segments spans residues 33-53 (LLGIGCVIGTGIFVITGTVAA), 56-76 (AGPALIISFILAGLACALAAF), 102-122 (LLAFLIGWDLMLEYVIALSAV), 152-172 (MAGAVFNLPAAVIILLITAIV), 185-205 (VIVLMKIAIILLFIIVGIGYV), 213-233 (FMPFGMKGVILSAATVFFAYL), 254-274 (VGIISALAVCTVLYIAVSLVL), 301-321 (VAGIISVGAIIGITTVMLALL), 355-375 (TWLTGIVAAGIAGFINLGTLA), 376-396 (HLVNMGTLAAFTVISIAVIVL), 409-429 (VPFVPVVPIISAGICLWFMYS), and 432-452 (GVTWLSFVIWIAVGTLVYFLY).

This sequence belongs to the amino acid-polyamine-organocation (APC) superfamily.

The protein localises to the cell membrane. Involved in import of methylthioribose (MTR) into the cell. The chain is Methylthioribose transporter from Bacillus subtilis (strain 168).